A 180-amino-acid chain; its full sequence is Geminin homolog (180 aa).

Positions 1–27 are enriched in polar residues; the sequence is MSRIGLQQLNNSARNSPFGSEKATGTK. The tract at residues 1 to 29 is disordered; sequence MSRIGLQQLNNSARNSPFGSEKATGTKQI.

It belongs to the geminin family. In terms of assembly, homodimer. Interacts with cdt-1; the interaction most likely inhibits the ability of cdt-1 to load the mini-chromosome maintenance (MCM) complex onto DNA and therefore reduces DNA replication licensing activity. Interacts with nob-1 and ceh-32.

It is found in the cytoplasm. The protein localises to the nucleus. In terms of biological role, inhibits DNA replication by binding to the DNA replication licensing factor cdt-1. Its interaction with cdt-1 prevents the cdt-1 loading of the mini-chromosome maintenance (MCM) complex onto DNA and therefore DNA replication licencing. The chain is Geminin homolog from Caenorhabditis elegans.